Reading from the N-terminus, the 292-residue chain is MPRRLCALLLLASQCLGSTAGLFPFGEPDFSYKRSNCKPIPAPMLLCRGIEYQSMRLPNLLGHETVQEVLEQATTWIPLVQKQCHPDTRKFLCSLFAPVCIDDLDEIIQPCHSLCEEVKESCAPVMSAFGFPWPDMLDCSRFPKDNDLCIPLASSDHILPVTREAPKVCDACKNKNEDDNDIMENLCKNDFALKIKVKEIAYINGDTKITPETKSKTIYKLNGLTERDLRKIVLWLKGGLQCTCDEMNDINVPYLVMGQKQAGELVITSLKRWQKGQRAFKRFSRSIRKLQC.

A signal peptide spans 1–20 (MPRRLCALLLLASQCLGSTA). The 121-residue stretch at 32–152 (YKRSNCKPIP…PKDNDLCIPL (121 aa)) folds into the FZ domain. 7 cysteine pairs are disulfide-bonded: Cys-37–Cys-100, Cys-47–Cys-93, Cys-84–Cys-122, Cys-111–Cys-149, Cys-115–Cys-139, Cys-169–Cys-242, and Cys-187–Cys-292. Residues 169–292 (CDACKNKNED…FSRSIRKLQC (124 aa)) enclose the NTR domain.

The protein belongs to the secreted frizzled-related protein (sFRP) family.

The protein resides in the secreted. Soluble frizzled-related proteins (sFRPS) function as modulators of Wnt signaling through direct interaction with Wnts. They have a role in regulating cell growth and differentiation in specific cell types. SFRP2 appears to be associated with myogenesis. The protein is Secreted frizzled-related protein 2 (SFRP2) of Gallus gallus (Chicken).